The chain runs to 1163 residues: Putative beta-glucuronidase (1163 aa).

Residues 1–20 (MPRFLKYILGLFLISISAFG) form the signal peptide.

This sequence belongs to the glycosyl hydrolase 2 family.

Its subcellular location is the periplasm. The enzyme catalyses a beta-D-glucuronoside + H2O = D-glucuronate + an alcohol. Functionally, glycoside hydrolase involved in ulvan degradation. Ulvan is the main polysaccharide component of the Ulvales (green seaweed) cell wall. It is composed of disaccharide building blocks comprising 3-sulfated rhamnose (Rha3S) linked to D-glucuronic acid (GlcA), L-iduronic acid (IduA), or D-xylose (Xyl). This chain is Putative beta-glucuronidase, found in Formosa agariphila (strain DSM 15362 / KCTC 12365 / LMG 23005 / KMM 3901 / M-2Alg 35-1).